The sequence spans 368 residues: Phenylalanine--tRNA ligase alpha subunit (368 aa).

Glu-268 serves as a coordination point for Mg(2+).

This sequence belongs to the class-II aminoacyl-tRNA synthetase family. Phe-tRNA synthetase alpha subunit type 1 subfamily. Tetramer of two alpha and two beta subunits. It depends on Mg(2+) as a cofactor.

Its subcellular location is the cytoplasm. It carries out the reaction tRNA(Phe) + L-phenylalanine + ATP = L-phenylalanyl-tRNA(Phe) + AMP + diphosphate + H(+). The chain is Phenylalanine--tRNA ligase alpha subunit from Nitrobacter hamburgensis (strain DSM 10229 / NCIMB 13809 / X14).